We begin with the raw amino-acid sequence, 470 residues long: Methylenetetrahydrofolate--tRNA-(uracil-5-)-methyltransferase TrmFO (470 aa).

Residue 10-15 (GAGLAG) coordinates FAD.

The protein belongs to the MnmG family. TrmFO subfamily. FAD serves as cofactor.

It localises to the cytoplasm. It catalyses the reaction uridine(54) in tRNA + (6R)-5,10-methylene-5,6,7,8-tetrahydrofolate + NADH + H(+) = 5-methyluridine(54) in tRNA + (6S)-5,6,7,8-tetrahydrofolate + NAD(+). The enzyme catalyses uridine(54) in tRNA + (6R)-5,10-methylene-5,6,7,8-tetrahydrofolate + NADPH + H(+) = 5-methyluridine(54) in tRNA + (6S)-5,6,7,8-tetrahydrofolate + NADP(+). Functionally, catalyzes the folate-dependent formation of 5-methyl-uridine at position 54 (M-5-U54) in all tRNAs. This Prochlorococcus marinus (strain MIT 9215) protein is Methylenetetrahydrofolate--tRNA-(uracil-5-)-methyltransferase TrmFO.